A 229-amino-acid chain; its full sequence is Cytidylate kinase (229 aa).

10-18 contacts ATP; the sequence is GFSSCGKST.

Belongs to the cytidylate kinase family. Type 1 subfamily.

It is found in the cytoplasm. The catalysed reaction is CMP + ATP = CDP + ADP. It catalyses the reaction dCMP + ATP = dCDP + ADP. The sequence is that of Cytidylate kinase from Bacteroides thetaiotaomicron (strain ATCC 29148 / DSM 2079 / JCM 5827 / CCUG 10774 / NCTC 10582 / VPI-5482 / E50).